Here is a 155-residue protein sequence, read N- to C-terminus: Basic phospholipase A2 PC1 (155 aa).

An N-terminal signal peptide occupies residues 1–21 (MYPAHLLVLLAVCVSLLGASA). The propeptide occupies 22-27 (ISNRPR). 7 disulfide bridges follow: C38/C98, C54/C144, C56/C72, C71/C125, C78/C118, C87/C111, and C105/C116. Ca(2+) is bound by residues Y55, G57, and G59. H75 is a catalytic residue. Ca(2+) is bound at residue D76. D119 is a catalytic residue.

Belongs to the phospholipase A2 family. Group I subfamily. D49 sub-subfamily. Ca(2+) serves as cofactor. Expressed by the venom gland.

The protein resides in the secreted. The catalysed reaction is a 1,2-diacyl-sn-glycero-3-phosphocholine + H2O = a 1-acyl-sn-glycero-3-phosphocholine + a fatty acid + H(+). In terms of biological role, snake venom phospholipase A2 (PLA2) that inhibits neuromuscular transmission by blocking acetylcholine release from the nerve termini. PLA2 catalyzes the calcium-dependent hydrolysis of the 2-acyl groups in 3-sn-phosphoglycerides. This chain is Basic phospholipase A2 PC1, found in Laticauda colubrina (Yellow-lipped sea krait).